Here is a 205-residue protein sequence, read N- to C-terminus: Molybdenum cofactor guanylyltransferase (205 aa).

GTP is bound by residues 14–16 (LAG), Lys27, Asp77, and Asp107. Mg(2+) is bound at residue Asp107.

It belongs to the MobA family. In terms of assembly, monomer. Mg(2+) serves as cofactor.

The protein localises to the cytoplasm. It catalyses the reaction Mo-molybdopterin + GTP + H(+) = Mo-molybdopterin guanine dinucleotide + diphosphate. Its function is as follows. Transfers a GMP moiety from GTP to Mo-molybdopterin (Mo-MPT) cofactor (Moco or molybdenum cofactor) to form Mo-molybdopterin guanine dinucleotide (Mo-MGD) cofactor. The sequence is that of Molybdenum cofactor guanylyltransferase from Burkholderia orbicola (strain MC0-3).